The chain runs to 193 residues: Orotate phosphoribosyltransferase (193 aa).

Position 114 to 122 (114 to 122 (EDVITTGGS)) interacts with 5-phospho-alpha-D-ribose 1-diphosphate. Orotate is bound by residues Thr118 and Arg146.

It belongs to the purine/pyrimidine phosphoribosyltransferase family. PyrE subfamily. As to quaternary structure, homodimer. Mg(2+) serves as cofactor.

It carries out the reaction orotidine 5'-phosphate + diphosphate = orotate + 5-phospho-alpha-D-ribose 1-diphosphate. Its pathway is pyrimidine metabolism; UMP biosynthesis via de novo pathway; UMP from orotate: step 1/2. Catalyzes the transfer of a ribosyl phosphate group from 5-phosphoribose 1-diphosphate to orotate, leading to the formation of orotidine monophosphate (OMP). The chain is Orotate phosphoribosyltransferase from Chlorobaculum parvum (strain DSM 263 / NCIMB 8327) (Chlorobium vibrioforme subsp. thiosulfatophilum).